We begin with the raw amino-acid sequence, 32 residues long: Turripeptide XIV-18 (32 aa).

Ile30 carries the post-translational modification Isoleucine amide.

Post-translationally, contains 2 disulfide bonds. As to expression, expressed by the venom duct.

Its subcellular location is the secreted. This chain is Turripeptide XIV-18, found in Gemmula speciosa (Splendid gem-turris).